A 263-amino-acid chain; its full sequence is 3-methyl-2-oxobutanoate hydroxymethyltransferase (263 aa).

Positions 45 and 84 each coordinate Mg(2+). 3-methyl-2-oxobutanoate contacts are provided by residues 45 to 46 (DS), D84, and K112. E114 contributes to the Mg(2+) binding site. E180 acts as the Proton acceptor in catalysis.

This sequence belongs to the PanB family. As to quaternary structure, homodecamer; pentamer of dimers. It depends on Mg(2+) as a cofactor.

The protein resides in the cytoplasm. The enzyme catalyses 3-methyl-2-oxobutanoate + (6R)-5,10-methylene-5,6,7,8-tetrahydrofolate + H2O = 2-dehydropantoate + (6S)-5,6,7,8-tetrahydrofolate. It functions in the pathway cofactor biosynthesis; (R)-pantothenate biosynthesis; (R)-pantoate from 3-methyl-2-oxobutanoate: step 1/2. In terms of biological role, catalyzes the reversible reaction in which hydroxymethyl group from 5,10-methylenetetrahydrofolate is transferred onto alpha-ketoisovalerate to form ketopantoate. The chain is 3-methyl-2-oxobutanoate hydroxymethyltransferase from Salmonella agona (strain SL483).